The sequence spans 131 residues: S-adenosylmethionine decarboxylase proenzyme (131 aa).

Serine 64 acts as the Schiff-base intermediate with substrate; via pyruvic acid in catalysis. The residue at position 64 (serine 64) is a Pyruvic acid (Ser); by autocatalysis. Residue histidine 69 is the Proton acceptor; for processing activity of the active site. Catalysis depends on cysteine 84, which acts as the Proton donor; for catalytic activity.

This sequence belongs to the prokaryotic AdoMetDC family. Type 1 subfamily. Heterotetramer of two alpha and two beta chains arranged as a dimer of alpha/beta heterodimers. The cofactor is pyruvate. Post-translationally, is synthesized initially as an inactive proenzyme. Formation of the active enzyme involves a self-maturation process in which the active site pyruvoyl group is generated from an internal serine residue via an autocatalytic post-translational modification. Two non-identical subunits are generated from the proenzyme in this reaction, and the pyruvate is formed at the N-terminus of the alpha chain, which is derived from the carboxyl end of the proenzyme. The post-translation cleavage follows an unusual pathway, termed non-hydrolytic serinolysis, in which the side chain hydroxyl group of the serine supplies its oxygen atom to form the C-terminus of the beta chain, while the remainder of the serine residue undergoes an oxidative deamination to produce ammonia and the pyruvoyl group blocking the N-terminus of the alpha chain.

It catalyses the reaction S-adenosyl-L-methionine + H(+) = S-adenosyl 3-(methylsulfanyl)propylamine + CO2. Its pathway is amine and polyamine biosynthesis; S-adenosylmethioninamine biosynthesis; S-adenosylmethioninamine from S-adenosyl-L-methionine: step 1/1. Functionally, catalyzes the decarboxylation of S-adenosylmethionine to S-adenosylmethioninamine (dcAdoMet), the propylamine donor required for the synthesis of the polyamines spermine and spermidine from the diamine putrescine. In Thermoplasma acidophilum (strain ATCC 25905 / DSM 1728 / JCM 9062 / NBRC 15155 / AMRC-C165), this protein is S-adenosylmethionine decarboxylase proenzyme.